The sequence spans 61 residues: Phospholipase A2 (61 aa).

Positions 27, 29, and 31 each coordinate Ca(2+). Cys28 and Cys35 are joined by a disulfide. Residue His38 is part of the active site. A Ca(2+)-binding site is contributed by Asp39. Residues Cys41 and Cys59 are joined by a disulfide bond. Asp60 is a catalytic residue.

This sequence belongs to the phospholipase A2 family. Group II subfamily. D49 sub-subfamily. As to quaternary structure, homodimer. Ca(2+) is required as a cofactor. In terms of tissue distribution, expressed by the venom gland.

Its subcellular location is the secreted. The catalysed reaction is a 1,2-diacyl-sn-glycero-3-phosphocholine + H2O = a 1-acyl-sn-glycero-3-phosphocholine + a fatty acid + H(+). Snake venom phospholipase A2 (PLA2) that displays edema-inducing activities. PLA2 catalyzes the calcium-dependent hydrolysis of the 2-acyl groups in 3-sn-phosphoglycerides. The polypeptide is Phospholipase A2 (Crotalus atrox (Western diamondback rattlesnake)).